A 508-amino-acid chain; its full sequence is ADP-ribosylarginine hydrolase CG3568 (508 aa).

R209, G349, G351, G353, V354, W355, W390, D441, N448, E449, G459, and D460 together coordinate ADP-D-ribose.

The enzyme catalyses N(omega)-(ADP-D-ribosyl)-L-arginyl-[protein] + H2O = ADP-D-ribose + L-arginyl-[protein]. The catalysed reaction is N(omega)-(ADP-D-ribosyl)-L-arginine + H2O = ADP-D-ribose + L-arginine. Protein ADP-ribosyl hydrolase that specifically removes mono-ADP-ribosyl modifications from protein arginine residues. The sequence is that of ADP-ribosylarginine hydrolase CG3568 from Drosophila melanogaster (Fruit fly).